A 261-amino-acid chain; its full sequence is Small ribosomal subunit protein eS1 (261 aa).

Residues 1–18 are compositionally biased toward basic residues; the sequence is MAVGKNKRISKGKKGGKK. The tract at residues 1–20 is disordered; that stretch reads MAVGKNKRISKGKKGGKKKA.

The protein belongs to the eukaryotic ribosomal protein eS1 family. In terms of assembly, component of the small ribosomal subunit. Mature ribosomes consist of a small (40S) and a large (60S) subunit. The 40S subunit contains about 33 different proteins and 1 molecule of RNA (18S). The 60S subunit contains about 49 different proteins and 3 molecules of RNA (25S, 5.8S and 5S).

The protein resides in the cytoplasm. The sequence is that of Small ribosomal subunit protein eS1 from Catharanthus roseus (Madagascar periwinkle).